A 346-amino-acid chain; its full sequence is Phosphoribosylformylglycinamidine cyclo-ligase (346 aa).

It belongs to the AIR synthase family.

The protein resides in the cytoplasm. It carries out the reaction 2-formamido-N(1)-(5-O-phospho-beta-D-ribosyl)acetamidine + ATP = 5-amino-1-(5-phospho-beta-D-ribosyl)imidazole + ADP + phosphate + H(+). The protein operates within purine metabolism; IMP biosynthesis via de novo pathway; 5-amino-1-(5-phospho-D-ribosyl)imidazole from N(2)-formyl-N(1)-(5-phospho-D-ribosyl)glycinamide: step 2/2. The sequence is that of Phosphoribosylformylglycinamidine cyclo-ligase from Geobacillus kaustophilus (strain HTA426).